Consider the following 345-residue polypeptide: MSASCGPLGTSLTQEILSSLGLADKTAAWGTLGTLRTFLSFSVDKDVQRLLKAIAGQGVDYDTIVDVLTNRSREQRQLISRAFQERTKQDLLKSLQAALSGNLEKIVVALLQPAAQFDAQELRTALKTSGSAEDVALEILATRAAPGLQACLAVYKHDFQVEAEEDIRTETNGILQDLLLALSKGDRESYSGIIDYNLEEQDVRALQQAGESSTAGQWVLLLTQRSPEHLIRVFDQYRRCTGQELEDAIRNCFHGDAQLALISLASMLRNTALYFANKLHQALQETEPNFQVLTRVLISRSESDLLSIRAEFKKKFGKSLYSSLQDVVRGDCRSALLALCRAEDI.

Annexin repeat units lie at residues F41–Q112, P113–K184, N197–S266, and N270–R341.

It belongs to the annexin family. In terms of assembly, homodimer.

Its function is as follows. May act as a low affinity receptor for acetylcholine. The chain is Annexin A9 (Anxa9) from Mus musculus (Mouse).